The chain runs to 395 residues: Envelope glycoprotein D (395 aa).

The first 17 residues, 1–17 (MGSGIAAVLLSLAVALA), serve as a signal peptide directing secretion. Residues 18–342 (RVPAGEGEYV…PAPAPSGHTG (325 aa)) lie on the Virion surface side of the membrane. His63 is a binding site for Zn(2+). 3 cysteine pairs are disulfide-bonded: Cys90/Cys214, Cys131/Cys227, and Cys143/Cys152. A glycan (N-linked (GlcNAc...) asparagine; by host) is linked at Asn119. Zn(2+) is bound at residue Asp240. Residues 261–306 (LQAAGWHGPKAPFTSTLLPPEVVETANVTRPELAPEERGTSRTPGD) are profusion. Residue Asn287 is glycosylated (N-linked (GlcNAc...) asparagine; by host). The interval 289 to 314 (TRPELAPEERGTSRTPGDEPAPAVAA) is disordered. The helical transmembrane segment at 343–362 (AVVGALAGAGLAAGVVVLAV) threads the bilayer. The Intravirion segment spans residues 363-395 (YLVRRRGRAAGKHVRLPELLEEAHGPARRGAPY).

The protein belongs to the herpesviridae glycoprotein D family.

The protein localises to the virion membrane. In terms of biological role, envelope glycoprotein that binds to host cell entry receptors, promoting the virus entry into host cells. May trigger fusion with host membrane, by recruiting the fusion machinery composed of gB and gH/gL. This is Envelope glycoprotein D (gD) from Cercopithecine herpesvirus 1 (CeHV-1).